Here is a 453-residue protein sequence, read N- to C-terminus: Carbamoyl phosphate synthase arginine-specific small chain (453 aa).

The N-terminal 28 residues, 1–28, are a transit peptide targeting the mitochondrion; that stretch reads MFARVFKAMPARAPAFTSVNASIQSRFM. The Glutamine amidotransferase type-1 domain maps to 219–406; sequence HVAVIDCGVK…LDSVVKYKNH (188 aa). The active-site Nucleophile is the Cys-295. Catalysis depends on residues His-379 and Glu-381.

It belongs to the CarA family. As to quaternary structure, heterodimer composed of 2 chains; the small (or glutamine) chain promotes the hydrolysis of glutamine to ammonia, which is used by the large (or ammonia) chain to synthesize carbamoyl phosphate.

The protein localises to the mitochondrion matrix. The catalysed reaction is hydrogencarbonate + L-glutamine + 2 ATP + H2O = carbamoyl phosphate + L-glutamate + 2 ADP + phosphate + 2 H(+). It carries out the reaction L-glutamine + H2O = L-glutamate + NH4(+). Its pathway is amino-acid biosynthesis; L-arginine biosynthesis; carbamoyl phosphate from bicarbonate: step 1/1. Small subunit of the arginine-specific carbamoyl phosphate synthase (CPSase). CPSase catalyzes the formation of carbamoyl phosphate from the ammonia moiety of glutamine, carbonate, and phosphate donated by ATP, the first step of the arginine biosynthetic pathway. The small subunit (glutamine amidotransferase) binds and cleaves glutamine to supply the large subunit with the substrate ammonia. The polypeptide is Carbamoyl phosphate synthase arginine-specific small chain (cpa1) (Aspergillus niger (strain ATCC MYA-4892 / CBS 513.88 / FGSC A1513)).